Here is a 986-residue protein sequence, read N- to C-terminus: Bifunctional glutamine synthetase adenylyltransferase/adenylyl-removing enzyme (986 aa).

Residues Met1 to Ala471 are adenylyl removase. The adenylyl transferase stretch occupies residues Thr475–Ala986.

The protein belongs to the GlnE family. Mg(2+) is required as a cofactor.

The enzyme catalyses [glutamine synthetase]-O(4)-(5'-adenylyl)-L-tyrosine + phosphate = [glutamine synthetase]-L-tyrosine + ADP. It carries out the reaction [glutamine synthetase]-L-tyrosine + ATP = [glutamine synthetase]-O(4)-(5'-adenylyl)-L-tyrosine + diphosphate. Its function is as follows. Involved in the regulation of glutamine synthetase GlnA, a key enzyme in the process to assimilate ammonia. When cellular nitrogen levels are high, the C-terminal adenylyl transferase (AT) inactivates GlnA by covalent transfer of an adenylyl group from ATP to specific tyrosine residue of GlnA, thus reducing its activity. Conversely, when nitrogen levels are low, the N-terminal adenylyl removase (AR) activates GlnA by removing the adenylyl group by phosphorolysis, increasing its activity. The regulatory region of GlnE binds the signal transduction protein PII (GlnB) which indicates the nitrogen status of the cell. The polypeptide is Bifunctional glutamine synthetase adenylyltransferase/adenylyl-removing enzyme (Rhizobium meliloti (strain 1021) (Ensifer meliloti)).